The primary structure comprises 81 residues: Small serum protein 4 (81 aa).

An N-terminal signal peptide occupies residues Met-1–Gly-19. 3 cysteine pairs are disulfide-bonded: Cys-21–Cys-74, Cys-41–Cys-66, and Cys-64–Cys-73.

Belongs to the beta-microseminoprotein family.

The protein resides in the secreted. Functionally, shows an slight inhibitory effect toward the metalloproteinase brevilysin H6, but does not inhibit the metalloproteinases thermolysin, HR1A and HR1B. This is Small serum protein 4 from Protobothrops flavoviridis (Habu).